The primary structure comprises 430 residues: Enolase (430 aa).

Gln167 is a binding site for (2R)-2-phosphoglycerate. Glu209 (proton donor) is an active-site residue. Asp245, Glu286, and Asp313 together coordinate Mg(2+). Residues Lys338, Arg367, Ser368, and Lys389 each coordinate (2R)-2-phosphoglycerate. Lys338 serves as the catalytic Proton acceptor.

Belongs to the enolase family. Mg(2+) is required as a cofactor.

The protein localises to the cytoplasm. It is found in the secreted. Its subcellular location is the cell surface. It carries out the reaction (2R)-2-phosphoglycerate = phosphoenolpyruvate + H2O. The protein operates within carbohydrate degradation; glycolysis; pyruvate from D-glyceraldehyde 3-phosphate: step 4/5. Functionally, catalyzes the reversible conversion of 2-phosphoglycerate (2-PG) into phosphoenolpyruvate (PEP). It is essential for the degradation of carbohydrates via glycolysis. In Synechococcus sp. (strain CC9311), this protein is Enolase.